The primary structure comprises 125 residues: Fluoride-specific ion channel FluC (125 aa).

The next 4 membrane-spanning stretches (helical) occupy residues 4 to 24 (VIYVALGGAVGSVLRYWVGIV), 32 to 52 (FLPWGTFSVNLIGSFCIGLFA), 68 to 88 (LLITGLLGGFTTFSAFMLDTV), and 100 to 120 (AFYVAASIGFGVGAVFAGLAV). Residues glycine 75 and threonine 78 each coordinate Na(+).

This sequence belongs to the fluoride channel Fluc/FEX (TC 1.A.43) family.

Its subcellular location is the cell inner membrane. It carries out the reaction fluoride(in) = fluoride(out). Na(+) is not transported, but it plays an essential structural role and its presence is essential for fluoride channel function. Fluoride-specific ion channel. Important for reducing fluoride concentration in the cell, thus reducing its toxicity. The protein is Fluoride-specific ion channel FluC of Allorhizobium ampelinum (strain ATCC BAA-846 / DSM 112012 / S4) (Agrobacterium vitis (strain S4)).